A 253-amino-acid polypeptide reads, in one-letter code: Ribosomal RNA small subunit methyltransferase J (253 aa).

S-adenosyl-L-methionine contacts are provided by residues 101–102, 117–118, and aspartate 169; these read RD and ER.

This sequence belongs to the methyltransferase superfamily. RsmJ family.

It localises to the cytoplasm. It carries out the reaction guanosine(1516) in 16S rRNA + S-adenosyl-L-methionine = N(2)-methylguanosine(1516) in 16S rRNA + S-adenosyl-L-homocysteine + H(+). Its function is as follows. Specifically methylates the guanosine in position 1516 of 16S rRNA. This is Ribosomal RNA small subunit methyltransferase J from Psychromonas ingrahamii (strain DSM 17664 / CCUG 51855 / 37).